We begin with the raw amino-acid sequence, 489 residues long: MSEAITGAERYKSGVIPYKKMGYWEPDYVPKDTDIIAMFRITPQAGVEPEEAAAAVAGESSTATWTVVWTDRLTACELYRAKAFRTDPVPNTGEGTKTEQQYFAYIAYDLDLFEPGSIANLTASIIGNVFGFKAVKALRLEDMRIPVAYLKTFQGPATGIIVERERLDKFGRPLLGATTKPKLGLSGRNYGRVVYEGLKGGLDFMKDDENINSQPFMHWRDRFLYCMEAVNKASAATGEVKGHYLNVTAGTMEEMYERAEFAKSLGSVIIMIDLVIGYTAIQSMAKWARKNDMILHLHRAGNSTYSRQKNHGMNFRVICKWMRMAGVDHIHAGTVVGKLEGDPLMIKGFYDTLRDRHTPVSLEHGLFFEQDWASLNKVMPVASGGIHAGQMHQLLDYLGEDVILQFGGGTIGHPQGIQAGAVANRVALEAMIMARNEGRDYVKEGPQILEEAAKWCTPLKLALDTWKDITFNYESTDTADFVPSETASV.

Substrate contacts are provided by Asn-128 and Thr-178. The active-site Proton acceptor is the Lys-180. Lys-182 lines the substrate pocket. Mg(2+) is bound by residues Lys-206, Asp-208, and Glu-209. An N6-carboxylysine modification is found at Lys-206. The active-site Proton acceptor is His-298. Substrate contacts are provided by Arg-299, His-331, and Ser-383.

It belongs to the RuBisCO large chain family. Type I subfamily. As to quaternary structure, heterohexadecamer of 8 large chains and 8 small chains. It depends on Mg(2+) as a cofactor.

The enzyme catalyses 2 (2R)-3-phosphoglycerate + 2 H(+) = D-ribulose 1,5-bisphosphate + CO2 + H2O. The catalysed reaction is D-ribulose 1,5-bisphosphate + O2 = 2-phosphoglycolate + (2R)-3-phosphoglycerate + 2 H(+). In terms of biological role, ruBisCO catalyzes two reactions: the carboxylation of D-ribulose 1,5-bisphosphate, the primary event in carbon dioxide fixation, as well as the oxidative fragmentation of the pentose substrate. Both reactions occur simultaneously and in competition at the same active site. The protein is Ribulose bisphosphate carboxylase large chain of Nitrosospira multiformis (strain ATCC 25196 / NCIMB 11849 / C 71).